Consider the following 419-residue polypeptide: Aminoacyltransferase FemB (419 aa).

Belongs to the FemABX family. As to quaternary structure, homodimer. Interacts with FemA.

Its subcellular location is the cytoplasm. It catalyses the reaction MurNAc-L-Ala-D-isoglutaminyl-L-Lys-(N(6)-tri-Gly)-D-Ala-D-Ala-diphospho-di-trans,octa-cis-undecaprenyl-GlcNAc + 2 glycyl-tRNA(Gly) = MurNAc-L-Ala-D-isoglutaminyl-L-Lys-(N(6)-penta-Gly)-D-Ala-D-Ala-diphospho-di-trans,octa-cis-undecaprenyl-GlcNAc + 2 tRNA(Gly) + 2 H(+). Catalyzes the formation of the pentaglycine interpeptide bridge, which is characteristic of the S.aureus peptidoglycan. Adds glycines 4 and 5 of the pentaglycine bridge, using glycyl-tRNA(Gly) as donor. Involved in resistance to methicillin. The polypeptide is Aminoacyltransferase FemB (femB) (Staphylococcus aureus (strain NCTC 8325 / PS 47)).